The chain runs to 609 residues: NADH-ubiquinone oxidoreductase chain 5 (609 aa).

The next 15 membrane-spanning stretches (helical) occupy residues 6–26 (SSIL…MTNL), 35–55 (YATS…LLFF), 84–104 (YFSI…MQFS), 116–138 (RFIK…NNLF), 140–160 (LFIG…WWYG), 171–191 (AILY…WFCL), 240–260 (TPVS…FLMI), 272–292 (IMTA…ICAL), 300–319 (IVAF…LGIN), 330–350 (THAF…HSLN), 365–385 (MPFT…MPFL), 409–429 (MITL…IYFV), 456–476 (LALG…PTNI), 481–501 (MPWH…AIAL), and 581–601 (GLIK…FILH).

This sequence belongs to the complex I subunit 5 family. As to quaternary structure, core subunit of respiratory chain NADH dehydrogenase (Complex I) which is composed of 45 different subunits.

Its subcellular location is the mitochondrion inner membrane. The catalysed reaction is a ubiquinone + NADH + 5 H(+)(in) = a ubiquinol + NAD(+) + 4 H(+)(out). In terms of biological role, core subunit of the mitochondrial membrane respiratory chain NADH dehydrogenase (Complex I) which catalyzes electron transfer from NADH through the respiratory chain, using ubiquinone as an electron acceptor. Essential for the catalytic activity and assembly of complex I. This Rattus norvegicus (Rat) protein is NADH-ubiquinone oxidoreductase chain 5.